Reading from the N-terminus, the 228-residue chain is 3,4-dihydroxy-2-butanone 4-phosphate synthase (228 aa).

D-ribulose 5-phosphate-binding positions include 37-38 (RE), D42, 150-154 (RRGHT), and E174. Residue E38 coordinates Mg(2+). H153 provides a ligand contact to Mg(2+).

It belongs to the DHBP synthase family. As to quaternary structure, homodimer. Mg(2+) is required as a cofactor. Mn(2+) serves as cofactor.

It catalyses the reaction D-ribulose 5-phosphate = (2S)-2-hydroxy-3-oxobutyl phosphate + formate + H(+). It functions in the pathway cofactor biosynthesis; riboflavin biosynthesis; 2-hydroxy-3-oxobutyl phosphate from D-ribulose 5-phosphate: step 1/1. Its function is as follows. Catalyzes the conversion of D-ribulose 5-phosphate to formate and 3,4-dihydroxy-2-butanone 4-phosphate. The protein is 3,4-dihydroxy-2-butanone 4-phosphate synthase of Photobacterium profundum (strain SS9).